Reading from the N-terminus, the 263-residue chain is Nitrogenase iron protein 2 (263 aa).

9–16 (GKGGIGKS) contacts ATP. C92 is a [4Fe-4S] cluster binding site. At R95 the chain carries ADP-ribosylarginine; by dinitrogenase reductase ADP-ribosyltransferase. [4Fe-4S] cluster is bound at residue C127.

Belongs to the NifH/BchL/ChlL family. In terms of assembly, homodimer. [4Fe-4S] cluster is required as a cofactor. Post-translationally, the reversible ADP-ribosylation of Arg-95 inactivates the nitrogenase reductase and regulates nitrogenase activity.

The catalysed reaction is N2 + 8 reduced [2Fe-2S]-[ferredoxin] + 16 ATP + 16 H2O = H2 + 8 oxidized [2Fe-2S]-[ferredoxin] + 2 NH4(+) + 16 ADP + 16 phosphate + 6 H(+). The key enzymatic reactions in nitrogen fixation are catalyzed by the nitrogenase complex, which has 2 components: the iron protein and the molybdenum-iron protein. The chain is Nitrogenase iron protein 2 (nifH2) from Methanobacterium ivanovii.